We begin with the raw amino-acid sequence, 316 residues long: Transaldolase (316 aa).

Catalysis depends on K132, which acts as the Schiff-base intermediate with substrate.

This sequence belongs to the transaldolase family. Type 1 subfamily. In terms of assembly, homodimer.

The protein resides in the cytoplasm. The catalysed reaction is D-sedoheptulose 7-phosphate + D-glyceraldehyde 3-phosphate = D-erythrose 4-phosphate + beta-D-fructose 6-phosphate. Its pathway is carbohydrate degradation; pentose phosphate pathway; D-glyceraldehyde 3-phosphate and beta-D-fructose 6-phosphate from D-ribose 5-phosphate and D-xylulose 5-phosphate (non-oxidative stage): step 2/3. Its function is as follows. Transaldolase is important for the balance of metabolites in the pentose-phosphate pathway. In Vibrio vulnificus (strain CMCP6), this protein is Transaldolase.